Consider the following 96-residue polypeptide: Protein RnfH (96 aa).

Belongs to the UPF0125 (RnfH) family.

The sequence is that of Protein RnfH from Klebsiella pneumoniae (strain 342).